The sequence spans 582 residues: DNA mismatch repair protein MutL (582 aa).

Belongs to the DNA mismatch repair MutL/HexB family.

In terms of biological role, this protein is involved in the repair of mismatches in DNA. It is required for dam-dependent methyl-directed DNA mismatch repair. May act as a 'molecular matchmaker', a protein that promotes the formation of a stable complex between two or more DNA-binding proteins in an ATP-dependent manner without itself being part of a final effector complex. The polypeptide is DNA mismatch repair protein MutL (Buchnera aphidicola subsp. Schizaphis graminum (strain Sg)).